The chain runs to 109 residues: Nucleoid-associated protein APL_0075 (109 aa).

The disordered stretch occupies residues 1–21 (MFGKGGLGGLMKQAQQMQERM). Low complexity predominate over residues 10–19 (LMKQAQQMQE).

It belongs to the YbaB/EbfC family. Homodimer.

The protein localises to the cytoplasm. Its subcellular location is the nucleoid. Binds to DNA and alters its conformation. May be involved in regulation of gene expression, nucleoid organization and DNA protection. The sequence is that of Nucleoid-associated protein APL_0075 from Actinobacillus pleuropneumoniae serotype 5b (strain L20).